The sequence spans 357 residues: CD4+ T-cell-stimulating antigen (357 aa).

Positions 1–22 are cleaved as a signal peptide; the sequence is MKKRTFALALSMIIASGVILGA. Cys-23 carries N-palmitoyl cysteine lipidation. Residue Cys-23 is the site of S-diacylglycerol cysteine attachment.

The protein belongs to the BMP lipoprotein family.

The protein localises to the cell membrane. This chain is CD4+ T-cell-stimulating antigen (tcsA), found in Listeria monocytogenes serovar 1/2a (strain ATCC BAA-679 / EGD-e).